A 144-amino-acid polypeptide reads, in one-letter code: 3-dehydroquinate dehydratase (144 aa).

Tyrosine 24 acts as the Proton acceptor in catalysis. Residues asparagine 73, histidine 79, and aspartate 86 each contribute to the substrate site. The Proton donor role is filled by histidine 99. Substrate-binding positions include leucine 100–serine 101 and arginine 110.

It belongs to the type-II 3-dehydroquinase family. As to quaternary structure, homododecamer.

It carries out the reaction 3-dehydroquinate = 3-dehydroshikimate + H2O. Its pathway is metabolic intermediate biosynthesis; chorismate biosynthesis; chorismate from D-erythrose 4-phosphate and phosphoenolpyruvate: step 3/7. Its function is as follows. Catalyzes a trans-dehydration via an enolate intermediate. In Shewanella sp. (strain ANA-3), this protein is 3-dehydroquinate dehydratase.